The chain runs to 325 residues: Tetraacyldisaccharide 4'-kinase (325 aa).

Residue 58-65 (TVGGSGKT) coordinates ATP.

It belongs to the LpxK family.

It carries out the reaction a lipid A disaccharide + ATP = a lipid IVA + ADP + H(+). Its pathway is glycolipid biosynthesis; lipid IV(A) biosynthesis; lipid IV(A) from (3R)-3-hydroxytetradecanoyl-[acyl-carrier-protein] and UDP-N-acetyl-alpha-D-glucosamine: step 6/6. Functionally, transfers the gamma-phosphate of ATP to the 4'-position of a tetraacyldisaccharide 1-phosphate intermediate (termed DS-1-P) to form tetraacyldisaccharide 1,4'-bis-phosphate (lipid IVA). This Coxiella burnetii (strain CbuG_Q212) (Coxiella burnetii (strain Q212)) protein is Tetraacyldisaccharide 4'-kinase.